A 236-amino-acid polypeptide reads, in one-letter code: 15,16-dihydrobiliverdin:ferredoxin oxidoreductase (236 aa).

This sequence belongs to the HY2 family.

It catalyses the reaction 15,16-dihydrobiliverdin + oxidized 2[4Fe-4S]-[ferredoxin] = biliverdin IXalpha + reduced 2[4Fe-4S]-[ferredoxin] + 2 H(+). Functionally, catalyzes the two-electron reduction of biliverdin IX-alpha at the C15 methine bridge. This chain is 15,16-dihydrobiliverdin:ferredoxin oxidoreductase (pebA), found in Synechococcus sp. (strain WH8020).